The following is a 393-amino-acid chain: S-adenosylmethionine sensor upstream of mTORC1 (393 aa).

The disordered stretch occupies residues 1-35; that stretch reads MDLRSSAETDPDLSENHPGSVPAELQSRKQEQEKL. Arginine 94 is a binding site for S-adenosyl-L-methionine. The tract at residues 118 to 141 is disordered; it reads DEKSARHATAGNANTDTNAPPQLS. Low complexity predominate over residues 125–136; that stretch reads ATAGNANTDTNA. Residues glycine 160, aspartate 178, aspartate 190, phenylalanine 191, and serine 232 each contribute to the S-adenosyl-L-methionine site. Positions 362–393 are disordered; it reads ELPETPYDSDSGESQSSSAPFYELEDPILLQS.

Belongs to the BMT2/SAMTOR family. As to quaternary structure, interacts with the GATOR1 complex; interaction is disrupted when samtor binds S-adenosyl-L-methionine. Interacts with the KICSTOR complex; interaction is disrupted when bmt2/samtor binds S-adenosyl-L-methionine.

Functionally, S-adenosyl-L-methionine-binding protein that acts as an inhibitor of mTORC1 signaling via interaction with the GATOR1 and KICSTOR complexes. Acts as a sensor of S-adenosyl-L-methionine to signal methionine sufficiency to mTORC1: in presence of methionine, binds S-adenosyl-L-methionine, leading to disrupt interaction with the GATOR1 and KICSTOR complexes and promote mTORC1 signaling. Upon methionine starvation, S-adenosyl-L-methionine levels are reduced, thereby promoting the association with GATOR1 and KICSTOR, leading to inhibit mTORC1 signaling. Probably also acts as a S-adenosyl-L-methionine-dependent methyltransferase. The sequence is that of S-adenosylmethionine sensor upstream of mTORC1 from Danio rerio (Zebrafish).